The chain runs to 280 residues: Formamidopyrimidine-DNA glycosylase (280 aa).

Proline 2 acts as the Schiff-base intermediate with DNA in catalysis. The active-site Proton donor is the glutamate 3. Lysine 53 acts as the Proton donor; for beta-elimination activity in catalysis. Positions 91, 110, and 152 each coordinate DNA. The FPG-type zinc-finger motif lies at 239 to 273 (HVYGRAGQPCDRCGTPIEKIVLGQRGTHFCPVCQP). The Proton donor; for delta-elimination activity role is filled by arginine 263.

This sequence belongs to the FPG family. In terms of assembly, monomer. Zn(2+) is required as a cofactor.

It catalyses the reaction Hydrolysis of DNA containing ring-opened 7-methylguanine residues, releasing 2,6-diamino-4-hydroxy-5-(N-methyl)formamidopyrimidine.. The enzyme catalyses 2'-deoxyribonucleotide-(2'-deoxyribose 5'-phosphate)-2'-deoxyribonucleotide-DNA = a 3'-end 2'-deoxyribonucleotide-(2,3-dehydro-2,3-deoxyribose 5'-phosphate)-DNA + a 5'-end 5'-phospho-2'-deoxyribonucleoside-DNA + H(+). Functionally, involved in base excision repair of DNA damaged by oxidation or by mutagenic agents. Acts as a DNA glycosylase that recognizes and removes damaged bases. Has a preference for oxidized purines, such as 7,8-dihydro-8-oxoguanine (8-oxoG). Has AP (apurinic/apyrimidinic) lyase activity and introduces nicks in the DNA strand. Cleaves the DNA backbone by beta-delta elimination to generate a single-strand break at the site of the removed base with both 3'- and 5'-phosphates. The protein is Formamidopyrimidine-DNA glycosylase (mutM) of Deinococcus radiodurans (strain ATCC 13939 / DSM 20539 / JCM 16871 / CCUG 27074 / LMG 4051 / NBRC 15346 / NCIMB 9279 / VKM B-1422 / R1).